A 172-amino-acid polypeptide reads, in one-letter code: Thioredoxin M-type, chloroplastic (172 aa).

Residues 1 to 60 (MALESLFKSIHTKTSLSSSIVFIFKGKACLLTSKSRIQESFAELNSFTSLVLLIENHVLL) constitute a chloroplast transit peptide. Residues 61–172 (HAREAVNEVQ…TLSEKVEKYI (112 aa)) form the Thioredoxin domain. Active-site nucleophile residues include Cys-97 and Cys-100. A disulfide bridge connects residues Cys-97 and Cys-100.

Belongs to the thioredoxin family. Plant M-type subfamily. In terms of assembly, forms a complex with heterodimeric ferredoxin-thioredoxin reductase (FTR) and ferredoxin.

The protein resides in the plastid. The protein localises to the chloroplast. Functionally, participates in various redox reactions through the reversible oxidation of the active center dithiol to a disulfide. The M form is known to activate NADP-malate dehydrogenase. This Pisum sativum (Garden pea) protein is Thioredoxin M-type, chloroplastic.